The chain runs to 430 residues: UDP-N-acetylglucosamine 1-carboxyvinyltransferase (430 aa).

22 to 23 contributes to the phosphoenolpyruvate binding site; it reads KN. A UDP-N-acetyl-alpha-D-glucosamine-binding site is contributed by Arg-102. Cys-126 (proton donor) is an active-site residue. Cys-126 carries the post-translational modification 2-(S-cysteinyl)pyruvic acid O-phosphothioketal. Residues 131–135, 172–175, Asp-317, and Ile-339 contribute to the UDP-N-acetyl-alpha-D-glucosamine site; these read RPVDL and KVSV.

The protein belongs to the EPSP synthase family. MurA subfamily.

It is found in the cytoplasm. It carries out the reaction phosphoenolpyruvate + UDP-N-acetyl-alpha-D-glucosamine = UDP-N-acetyl-3-O-(1-carboxyvinyl)-alpha-D-glucosamine + phosphate. It functions in the pathway cell wall biogenesis; peptidoglycan biosynthesis. Functionally, cell wall formation. Adds enolpyruvyl to UDP-N-acetylglucosamine. This chain is UDP-N-acetylglucosamine 1-carboxyvinyltransferase, found in Rhizobium leguminosarum bv. trifolii (strain WSM2304).